The primary structure comprises 104 residues: Large ribosomal subunit protein bL28 (104 aa).

It belongs to the bacterial ribosomal protein bL28 family.

This Wolbachia sp. subsp. Brugia malayi (strain TRS) protein is Large ribosomal subunit protein bL28.